A 296-amino-acid chain; its full sequence is MAQKVEAKGGKGGNQWDDGSDHDAVTKIQVAVGGMGIQYIQFDYVKNGQTEQTPLRGIKGSTIPTDPFVINHPEEHLVSIEIWYKPDGLIQGLRFISNKKTSRFIGYDRGTRSFLQVQDKKIIGFHGSAGDNLNSLGAYFAPLTIPLTPAKPLPALGSDDGTAWDDGAYVGVKKVYVGQAQDGISAVKFVYDKSPEEVTGEEHGKSTLLGFEEFVLDYPSEYIIAVEGTYDKIFGSDGSVITMLRFKTNKQTSPPFGLEAGTAFELKEEGHKIVGFHGRADALLHKIGVHVRPVSN.

Residues 1–20 (MAQKVEAKGGKGGNQWDDGS) form a disordered region. Ala2 carries the N-acetylalanine modification. Jacalin-type lectin domains lie at 2 to 142 (AQKV…YFAP) and 150 to 293 (AKPL…HVRP).

It belongs to the jacalin lectin family. In terms of assembly, component of the PYK10 complex, at least composed of PYK10/BGLU23, BGLU21, BGLU22, JAL22, JAL23, PBP1/JAL30, PBP2/JAL31, JAL32, JAL33, JAL34, JAL35, GLL22 and GLL23.

Its function is as follows. Polymerizer-type lectin that may facilitate the correct polymerization of BGLU23/PYK10 upon tissue damage. Activates BGLU21, BGLU22 and BGLU23. In Arabidopsis thaliana (Mouse-ear cress), this protein is PYK10-binding protein 2 (PBP2).